Reading from the N-terminus, the 98-residue chain is NADH-ubiquinone oxidoreductase chain 4L (98 aa).

3 helical membrane-spanning segments follow: residues 1–21, 29–49, and 61–81; these read MPSI…GMLI, SLLC…LTAL, and IVLL…LVMV.

Belongs to the complex I subunit 4L family. In terms of assembly, core subunit of respiratory chain NADH dehydrogenase (Complex I) which is composed of 45 different subunits.

It is found in the mitochondrion inner membrane. It catalyses the reaction a ubiquinone + NADH + 5 H(+)(in) = a ubiquinol + NAD(+) + 4 H(+)(out). Core subunit of the mitochondrial membrane respiratory chain NADH dehydrogenase (Complex I) which catalyzes electron transfer from NADH through the respiratory chain, using ubiquinone as an electron acceptor. Part of the enzyme membrane arm which is embedded in the lipid bilayer and involved in proton translocation. The sequence is that of NADH-ubiquinone oxidoreductase chain 4L (MT-ND4L) from Lepus europaeus (European hare).